We begin with the raw amino-acid sequence, 69 residues long: Pleurain-A3 (69 aa).

The N-terminal stretch at 1-22 (MFTLKKTLLLLFFLGTISISLC) is a signal peptide. The propeptide occupies 23-43 (KQARDADEDDGRKMTEEEVKR). Cysteine 63 and cysteine 69 are disulfide-bonded.

This sequence belongs to the frog skin active peptide (FSAP) family. Pleurain subfamily. As to expression, expressed by the skin glands.

The protein localises to the secreted. Functionally, antimicrobial peptide. Has activity against Gram-positive and -negative bacteria, and fungi. Has little hemolytic activity on red blood cells. In Nidirana pleuraden (Yunnan pond frog), this protein is Pleurain-A3.